An 82-amino-acid polypeptide reads, in one-letter code: Cytochrome b559 subunit alpha (82 aa).

The chain crosses the membrane as a helical span at residues 21–35 (VIHSVTIPSLFIAGW). Histidine 23 is a binding site for heme.

The protein belongs to the PsbE/PsbF family. Heterodimer of an alpha subunit and a beta subunit. PSII is composed of 1 copy each of membrane proteins PsbA, PsbB, PsbC, PsbD, PsbE, PsbF, PsbH, PsbI, PsbJ, PsbK, PsbL, PsbM, PsbT, PsbX, PsbY, PsbZ, Psb30/Ycf12, at least 3 peripheral proteins of the oxygen-evolving complex and a large number of cofactors. It forms dimeric complexes. It depends on heme b as a cofactor.

The protein resides in the plastid. It localises to the chloroplast thylakoid membrane. Functionally, this b-type cytochrome is tightly associated with the reaction center of photosystem II (PSII). PSII is a light-driven water:plastoquinone oxidoreductase that uses light energy to abstract electrons from H(2)O, generating O(2) and a proton gradient subsequently used for ATP formation. It consists of a core antenna complex that captures photons, and an electron transfer chain that converts photonic excitation into a charge separation. This Ostreococcus tauri protein is Cytochrome b559 subunit alpha.